Consider the following 295-residue polypeptide: 33 kDa chaperonin (295 aa).

2 cysteine pairs are disulfide-bonded: cysteine 237-cysteine 239 and cysteine 270-cysteine 273.

This sequence belongs to the HSP33 family. In terms of processing, under oxidizing conditions two disulfide bonds are formed involving the reactive cysteines. Under reducing conditions zinc is bound to the reactive cysteines and the protein is inactive.

The protein resides in the cytoplasm. Redox regulated molecular chaperone. Protects both thermally unfolding and oxidatively damaged proteins from irreversible aggregation. Plays an important role in the bacterial defense system toward oxidative stress. This chain is 33 kDa chaperonin, found in Lactiplantibacillus plantarum (strain ATCC BAA-793 / NCIMB 8826 / WCFS1) (Lactobacillus plantarum).